The chain runs to 286 residues: tRNA (guanine-N(7)-)-methyltransferase (286 aa).

S-adenosyl-L-methionine-binding residues include Glu91, Glu116, Asn143, and Asp165. Asp165 is an active-site residue. Substrate is bound by residues Lys169, Asp201, and 262–265 (TNFE).

The protein belongs to the class I-like SAM-binding methyltransferase superfamily. TrmB family.

The catalysed reaction is guanosine(46) in tRNA + S-adenosyl-L-methionine = N(7)-methylguanosine(46) in tRNA + S-adenosyl-L-homocysteine. It functions in the pathway tRNA modification; N(7)-methylguanine-tRNA biosynthesis. In terms of biological role, catalyzes the formation of N(7)-methylguanine at position 46 (m7G46) in tRNA. This chain is tRNA (guanine-N(7)-)-methyltransferase, found in Bifidobacterium longum subsp. infantis (strain ATCC 15697 / DSM 20088 / JCM 1222 / NCTC 11817 / S12).